The sequence spans 338 residues: Glyceraldehyde-3-phosphate dehydrogenase (338 aa).

NAD(+)-binding positions include 11-12 and G111; that span reads TI. 140–142 contributes to the D-glyceraldehyde 3-phosphate binding site; sequence SCN. C141 acts as the Nucleophile in catalysis. R169 provides a ligand contact to NAD(+). The tract at residues 170-195 is disordered; sequence GSDPSEVKKGPINSIVPNPPKVPSHH. 195-196 serves as a coordination point for D-glyceraldehyde 3-phosphate; that stretch reads HG. Residue Q302 coordinates NAD(+).

The protein belongs to the glyceraldehyde-3-phosphate dehydrogenase family. Homotetramer.

Its subcellular location is the cytoplasm. The enzyme catalyses D-glyceraldehyde 3-phosphate + phosphate + NADP(+) = (2R)-3-phospho-glyceroyl phosphate + NADPH + H(+). The catalysed reaction is D-glyceraldehyde 3-phosphate + phosphate + NAD(+) = (2R)-3-phospho-glyceroyl phosphate + NADH + H(+). The protein operates within carbohydrate degradation; glycolysis; pyruvate from D-glyceraldehyde 3-phosphate: step 1/5. The polypeptide is Glyceraldehyde-3-phosphate dehydrogenase (Methanobrevibacter smithii (strain ATCC 35061 / DSM 861 / OCM 144 / PS)).